The following is a 162-amino-acid chain: Photosystem II extrinsic protein V (162 aa).

The first 25 residues, 1-25 (MLKRCLWLVVTVLFAWQVFNGTAIA), serve as a signal peptide directing secretion. Heme c contacts are provided by Cys-62, Cys-65, His-66, and His-117.

This sequence belongs to the cytochrome c family. PsbV subfamily. PSII is composed of 1 copy each of membrane proteins PsbA, PsbB, PsbC, PsbD, PsbE, PsbF, PsbH, PsbI, PsbJ, PsbK, PsbL, PsbM, PsbT, PsbX, PsbY, PsbZ, Psb30/Ycf12, peripheral proteins PsbO, CyanoQ (PsbQ), PsbU, PsbV and a large number of cofactors. It forms dimeric complexes. Requires heme c as cofactor.

It is found in the cellular thylakoid membrane. Its function is as follows. One of the extrinsic, lumenal subunits of photosystem II (PSII). PSII is a light-driven water plastoquinone oxidoreductase, using light energy to abstract electrons from H(2)O, generating a proton gradient subsequently used for ATP formation. The extrinsic proteins stabilize the structure of photosystem II oxygen-evolving complex (OEC), the ion environment of oxygen evolution and protect the OEC against heat-induced inactivation. Low-potential cytochrome c that plays a role in the OEC of PSII. The sequence is that of Photosystem II extrinsic protein V from Cyanothece sp. (strain PCC 7425 / ATCC 29141).